Here is a 634-residue protein sequence, read N- to C-terminus: MPVIMGTAGHIDHGKTSLIKALTGINCDRLAEEQKRGITIELGFAYLDLTPEVRLGIIDVPGHERFVKNMVSGAAGIDFVLLVIAADEGIMPQTREHLEICSLLGIRAGLVALTKTDMVEEDWLELVHEEVQTYLAGSFLEGAPIVPVSAHTGAGLEELKGYIAELSSTFAPDRRSDLFRLPVDRVFTMKGHGTVVTGTSISGALRLGEEIEIVPSGHRSKVRGLQVHGTAAEVARAGERTAVNLYGLEVAELERGEVLAHPQTLFPSPVWDVEMTCLSSSPNPLKHRTEVHFHHGSREILAKLFFLDRDKLEPGETAVCQVRFPRPLPGVYGDRCIVRSFSPLQTVAGGRIINPLGRKVRRHSKDMETLSTLGAATGEELLLAQLRLAGRGGLTVAELRIMTDMESKLLDKTLQILGGKQLAFQFDRDDKRFVGADVLDGLAGACLEYLGEYHRREPMRQGLSRAELISGFGRGMHPKLVHFLVERLVKSGQVLLEADILRLPGHVVSLASDQSGLRTLMETTYVQAGLMPPTTKAFLEENGLTAKDVAQMFRLLMEEGVLIKVSEEFYYAKTAMDEIIGRVRSFFESNQEMGPQDFRDLTELTRKFAIPVLEYLDKEKITMRIGDKRQIRKR.

The tr-type G domain occupies 1-173; it reads MPVIMGTAGH…AELSSTFAPD (173 aa). The G1 stretch occupies residues 9-16; it reads GHIDHGKT. Position 9–16 (9–16) interacts with GTP; that stretch reads GHIDHGKT. The G2 stretch occupies residues 37-41; it reads GITIE. Residues 59 to 62 are G3; that stretch reads DVPG. Residues 59–63 and 114–117 each bind GTP; these read DVPGH and TKTD. The segment at 114–117 is G4; sequence TKTD. The tract at residues 149-151 is G5; the sequence is SAH.

This sequence belongs to the TRAFAC class translation factor GTPase superfamily. Classic translation factor GTPase family. SelB subfamily.

The protein resides in the cytoplasm. In terms of biological role, translation factor necessary for the incorporation of selenocysteine into proteins. It probably replaces EF-Tu for the insertion of selenocysteine directed by the UGA codon. SelB binds GTP and GDP. The chain is Selenocysteine-specific elongation factor (selB) from Desulfomicrobium baculatum (Desulfovibrio baculatus).